Consider the following 735-residue polypeptide: Catalase-peroxidase (735 aa).

Residues 1 to 25 (MSDSKCPVTGKSSRQVAGGGTSNRD) form a disordered region. The segment at residues 95–223 (WHSAGTYRMG…LAAVQMGLIY (129 aa)) is a cross-link (tryptophyl-tyrosyl-methioninium (Trp-Tyr) (with M-249)). Catalysis depends on histidine 96, which acts as the Proton acceptor. Residues 223 to 249 (YINPEGPDGNPDPVASGRDVRETFARM) constitute a cross-link (tryptophyl-tyrosyl-methioninium (Tyr-Met) (with W-95)). Heme b is bound at residue histidine 264.

It belongs to the peroxidase family. Peroxidase/catalase subfamily. As to quaternary structure, homodimer or homotetramer. It depends on heme b as a cofactor. Post-translationally, formation of the three residue Trp-Tyr-Met cross-link is important for the catalase, but not the peroxidase activity of the enzyme.

It carries out the reaction H2O2 + AH2 = A + 2 H2O. It catalyses the reaction 2 H2O2 = O2 + 2 H2O. Functionally, bifunctional enzyme with both catalase and broad-spectrum peroxidase activity. This is Catalase-peroxidase from Trichlorobacter lovleyi (strain ATCC BAA-1151 / DSM 17278 / SZ) (Geobacter lovleyi).